Here is a 376-residue protein sequence, read N- to C-terminus: HLVESKGGAIACMFLALFFLGTWPALLTMLERRGRLPQHTYLDYSITNFFAALLIAFTFGEIGKGKPDEPNFLAQLAQDNWPSVLFAMGGGVVLSLGNLSSQYAFAFVGLSVTEVITASITVVIGTTLNYFLDDKINKAEILFPGVGCFLIAVFLGFCRFNSSNASDNKAKLSNYTSDYKEVAISSKESDLVKSKDLERGSSSADNVEAGTAVFLLELEERRAIKVFGKSTLIGLALTFSAGLCFSMFSPAFNLATNDQWHTLPNGIPHLTVYTAFFYFSISCFVIAIILNITFLYHPVLNLPKSSLKAYLADSDGRIWALLAGLLCGFGNSLQFMGGQAAGYQQQSLCRHFLCKHFWGVLLFGEYRRSSRKTYIC.

The Extracellular portion of the chain corresponds to 1–9; that stretch reads HLVESKGGA. The helical transmembrane segment at 10-30 threads the bilayer; it reads IACMFLALFFLGTWPALLTML. Over 31–41 the chain is Cytoplasmic; it reads ERRGRLPQHTY. Residues 42-62 traverse the membrane as a helical segment; the sequence is LDYSITNFFAALLIAFTFGEI. The Extracellular portion of the chain corresponds to 63–80; that stretch reads GKGKPDEPNFLAQLAQDN. The helical transmembrane segment at 81 to 101 threads the bilayer; sequence WPSVLFAMGGGVVLSLGNLSS. Over 102–103 the chain is Cytoplasmic; the sequence is QY. Residues 104–124 form a helical membrane-spanning segment; sequence AFAFVGLSVTEVITASITVVI. The Extracellular portion of the chain corresponds to 125-137; that stretch reads GTTLNYFLDDKIN. The helical transmembrane segment at 138–158 threads the bilayer; that stretch reads KAEILFPGVGCFLIAVFLGFC. The Cytoplasmic segment spans residues 159–231; that stretch reads RFNSSNASDN…RAIKVFGKST (73 aa). ATP is bound at residue 223–230; it reads AIKVFGKS. Residues 232 to 252 form a helical membrane-spanning segment; sequence LIGLALTFSAGLCFSMFSPAF. The Extracellular portion of the chain corresponds to 253 to 274; that stretch reads NLATNDQWHTLPNGIPHLTVYT. A helical membrane pass occupies residues 275–295; the sequence is AFFYFSISCFVIAIILNITFL. Residues 296-317 are Cytoplasmic-facing; the sequence is YHPVLNLPKSSLKAYLADSDGR. Residues 318–338 form a helical membrane-spanning segment; it reads IWALLAGLLCGFGNSLQFMGG. Residues 339-376 are Extracellular-facing; sequence QAAGYQQQSLCRHFLCKHFWGVLLFGEYRRSSRKTYIC.

The protein belongs to the plant ureide permease (TC 2.A.7.19) family.

It is found in the membrane. Functionally, transports a wide spectrum of oxo derivatives of heterocyclic nitrogen compounds. The chain is Probable ureide permease A3 (A3) from Vigna unguiculata (Cowpea).